A 108-amino-acid chain; its full sequence is UPF0060 membrane protein Nham_2004 (108 aa).

4 helical membrane-spanning segments follow: residues 5 to 25 (AAYV…WAWL), 31 to 51 (VWWL…LTLV), 61 to 81 (AAYG…VEGL), and 88 to 108 (LTGA…PRQI).

The protein belongs to the UPF0060 family.

The protein localises to the cell inner membrane. The chain is UPF0060 membrane protein Nham_2004 from Nitrobacter hamburgensis (strain DSM 10229 / NCIMB 13809 / X14).